A 1017-amino-acid chain; its full sequence is Ubiquitin-like modifier-activating enzyme 1 (1017 aa).

A run of 2 repeats spans residues 26–163 (SHET…GQLF) and 419–571 (GKTL…QVVV). The interval 26-571 (SHETMKKITS…GTKGNTQVVV (546 aa)) is 2 approximate repeats. ATP contacts are provided by residues Ala438, Asp464, Arg475, Lys488, and 536–537 (DN). The Glycyl thioester intermediate role is filled by Cys592. Residues 765 to 781 (IQTSENEPAPSSNTQQA) show a composition bias toward polar residues. The disordered stretch occupies residues 765-788 (IQTSENEPAPSSNTQQAGGDAEDD).

This sequence belongs to the ubiquitin-activating E1 family. Monomer.

It catalyses the reaction ATP + ubiquitin + [E1 ubiquitin-activating enzyme]-L-cysteine = AMP + diphosphate + S-ubiquitinyl-[E1 ubiquitin-activating enzyme]-L-cysteine.. The protein operates within protein modification; protein ubiquitination. In terms of biological role, catalyzes the first step in ubiquitin conjugation to mark cellular proteins for degradation through the ubiquitin-proteasome system. Activates ubiquitin by first adenylating its C-terminal glycine residue with ATP, and thereafter linking this residue to the side chain of a cysteine residue in E1, yielding a ubiquitin-E1 thioester and free AMP. In Dictyostelium discoideum (Social amoeba), this protein is Ubiquitin-like modifier-activating enzyme 1 (uba1).